The following is a 131-amino-acid chain: Peptide methionine sulfoxide reductase MsrB (131 aa).

Residues 8-130 (LEEWRAMLDP…NSVCLDLVPR (123 aa)) form the MsrB domain. Zn(2+)-binding residues include Cys47, Cys50, Cys96, and Cys99. Cys119 functions as the Nucleophile in the catalytic mechanism.

It belongs to the MsrB Met sulfoxide reductase family. It depends on Zn(2+) as a cofactor.

The catalysed reaction is L-methionyl-[protein] + [thioredoxin]-disulfide + H2O = L-methionyl-(R)-S-oxide-[protein] + [thioredoxin]-dithiol. This Pseudomonas fluorescens (strain Pf0-1) protein is Peptide methionine sulfoxide reductase MsrB.